Reading from the N-terminus, the 269-residue chain is Small ribosomal subunit protein uS2 (269 aa).

The segment at 235-269 is disordered; that stretch reads FDAKNPLKPQNYNTLNKRPYQDSPRKPSYQNQNQR.

Belongs to the universal ribosomal protein uS2 family.

The protein is Small ribosomal subunit protein uS2 of Aster yellows witches'-broom phytoplasma (strain AYWB).